The primary structure comprises 230 residues: Phosphoglycerate mutase-like protein 4 (230 aa).

The active-site Tele-phosphohistidine intermediate is the His-21. Residue Glu-96 is the Proton donor/acceptor of the active site.

The protein belongs to the phosphoglycerate mutase family.

Its function is as follows. May play a role in carbohydrates metabolism. This chain is Phosphoglycerate mutase-like protein 4, found in Arabidopsis thaliana (Mouse-ear cress).